Reading from the N-terminus, the 906-residue chain is MISTLLTKIIGSRNDRTLKALRKIVKQINAMEPQFEALSDAQLQAKTAEYRQRLEQGETLEQLLPEAFATVREASRRVFGMRHFDVQLIGGMVLNSNRIAEMKTGEGKTLTATLPAYLNALSGRGVHVVTVNDYLAKRDAEANRPLFAFLGMTVDCNVPGMDASQKRDAYAADITYGTNNEFGFDYLRDNMAFSPEQRVQRPLNYALVDEVDSVLIDEARTPLIISGPAEDSSELYIRVNKLIPLLVKQDKEDSEEYTGDGHYTVDEKNRQALLTENGQIFVEELLKKEGLLAEDDSLFSATNISLLHHVNAGLRAHTLFERNVDYIVQKDEIVIVDEHTGRTMPGRRWSDGLHQAVEAKEGVKIQNENQTLASITFQNYFRLYDKLAGMTGTADTEAFEFQQIYGLDTVVIPTNKPMVRKDMGDLVYLTANEKYAAIIEDIRGCVERGQPVLVGTVSIENSELLSGILTKENIPHKVLNAKFHAMEAEIVAQAGQTGAVTIATNMAGRGTDIVLGGNWQAEIAQLENPTEAQIAELKAAWQVRHDAVLAAGGLHIIGTERHESRRIDNQLRGRSGRQGDPGSSRFYLSMEDTLMRIFASDRVTGMMKKLGMEEGEAIEHPWVTKAIENAQRKVEGRNFDIRKSLLEFDDVANDQRKVVYEQRNELLDTSDISETIHVIRDDVYGAIIDEYIPPQSLEEMWDVPGLEARLKSDFALDLPLQQWLAEDDKLYEEKLRERILDEATKLYAHKEELVGKEVLRNFEKAVMLQTLDGLWKEHLAAMDHLRQGIHLRGYAQKNPKQEYKRESFDLFTQMLETLKRDVVSILSRVQVQERDVEAMEEQQRQQAEAAPRTYTHAAADNQLADDEAQAEAAPVTFVRDEQKVGRNDPCPCGSGKKYKHCHGQLT.

ATP contacts are provided by residues Gln-87, 105–109 (GEGKT), and Asp-512. Positions 875–897 (VTFVRDEQKVGRNDPCPCGSGKK) are disordered. Cys-890, Cys-892, Cys-901, and His-902 together coordinate Zn(2+).

The protein belongs to the SecA family. Monomer and homodimer. Part of the essential Sec protein translocation apparatus which comprises SecA, SecYEG and auxiliary proteins SecDF-YajC and YidC. Zn(2+) is required as a cofactor.

The protein localises to the cell inner membrane. It localises to the cytoplasm. It catalyses the reaction ATP + H2O + cellular proteinSide 1 = ADP + phosphate + cellular proteinSide 2.. Part of the Sec protein translocase complex. Interacts with the SecYEG preprotein conducting channel. Has a central role in coupling the hydrolysis of ATP to the transfer of proteins into and across the cell membrane, serving both as a receptor for the preprotein-SecB complex and as an ATP-driven molecular motor driving the stepwise translocation of polypeptide chains across the membrane. This chain is Protein translocase subunit SecA, found in Aeromonas hydrophila subsp. hydrophila (strain ATCC 7966 / DSM 30187 / BCRC 13018 / CCUG 14551 / JCM 1027 / KCTC 2358 / NCIMB 9240 / NCTC 8049).